A 182-amino-acid chain; its full sequence is Peptidyl-prolyl cis-trans isomerase H (182 aa).

Residues 15–181 (FFDITLGGEP…LDVVIAQCGE (167 aa)) form the PPIase cyclophilin-type domain.

This sequence belongs to the cyclophilin-type PPIase family. PPIase H subfamily.

It localises to the nucleus. The catalysed reaction is [protein]-peptidylproline (omega=180) = [protein]-peptidylproline (omega=0). In terms of biological role, PPIases accelerate the folding of proteins. It catalyzes the cis-trans isomerization of proline imidic peptide bonds in oligopeptides. This Neurospora crassa (strain ATCC 24698 / 74-OR23-1A / CBS 708.71 / DSM 1257 / FGSC 987) protein is Peptidyl-prolyl cis-trans isomerase H (cyp-3).